The following is a 107-amino-acid chain: Protein HitA (107 aa).

Residues 5-107 enclose the HIT domain; it reads IFCKIAAKEI…LHIHIMGTPV (103 aa). The Histidine triad motif motif lies at 97–101; sequence HLHIH.

The protein is Protein HitA (hitA) of Neisseria gonorrhoeae.